Consider the following 381-residue polypeptide: Cytochrome b (381 aa).

The next 4 membrane-spanning stretches (helical) occupy residues 38-58, 82-103, 118-138, and 183-203; these read FGSLLGLCLLIQIVIGLFLAM, WLLRTVHANGASFFFICIYFHI, WMTGIALLFLVMAAAFLGYVL, and FFTFHFLIPFLVAGLTMIHLL. Residues His-88 and His-102 each contribute to the heme b site. Heme b is bound by residues His-187 and His-201. A ubiquinone is bound at residue His-206. 4 consecutive transmembrane segments (helical) span residues 231 to 251, 293 to 313, 325 to 345, and 352 to 372; these read IKDTVGFMVLIFFLVTLSLTS, LGGVIALVSSILILVSLPFTF, VAQPLFWSWVSVFLLLTWIGA, and YNFLGQILTCAYFSYFVFTPI.

The protein belongs to the cytochrome b family. In terms of assembly, the main subunits of complex b-c1 are: cytochrome b, cytochrome c1 and the Rieske protein. Heme b is required as a cofactor.

The protein localises to the mitochondrion inner membrane. In terms of biological role, component of the ubiquinol-cytochrome c reductase complex (complex III or cytochrome b-c1 complex) that is part of the mitochondrial respiratory chain. The b-c1 complex mediates electron transfer from ubiquinol to cytochrome c. Contributes to the generation of a proton gradient across the mitochondrial membrane that is then used for ATP synthesis. The sequence is that of Cytochrome b (MT-CYB) from Artemia franciscana (Brine shrimp).